A 61-amino-acid chain; its full sequence is Photosystem II reaction center protein K (61 aa).

Positions 1 to 24 (MLNTFSLIGICLNSTLYSSSFFFG) are excised as a propeptide. A helical membrane pass occupies residues 36–56 (IVDIMPVIPLFFFLLAFVWQA).

The protein belongs to the PsbK family. As to quaternary structure, PSII is composed of 1 copy each of membrane proteins PsbA, PsbB, PsbC, PsbD, PsbE, PsbF, PsbH, PsbI, PsbJ, PsbK, PsbL, PsbM, PsbT, PsbX, PsbY, PsbZ, Psb30/Ycf12, at least 3 peripheral proteins of the oxygen-evolving complex and a large number of cofactors. It forms dimeric complexes.

The protein resides in the plastid. It localises to the chloroplast thylakoid membrane. In terms of biological role, one of the components of the core complex of photosystem II (PSII). PSII is a light-driven water:plastoquinone oxidoreductase that uses light energy to abstract electrons from H(2)O, generating O(2) and a proton gradient subsequently used for ATP formation. It consists of a core antenna complex that captures photons, and an electron transfer chain that converts photonic excitation into a charge separation. The polypeptide is Photosystem II reaction center protein K (Solanum bulbocastanum (Wild potato)).